The sequence spans 228 residues: MILIEHILGNVKKDPIWQEKLKDATFDLLVLDQREAQKSRCRKLSTQGLDLGISLDRHVVLADGDVLAWDEKNRVAVVVQINLRDVMVIDLSELKSRSPDELIKTCFELGHALGNQHWKAVTKHNEVYVPLTVATTMMDSVMRTHGFQHLPFRFVKGAEILPLLSNSEARLLFGGAEDTDTHVHVASPLDEPHGSGLHIHAIHSHGDGHSHDHDHSHSHGDHDHDHKH.

Positions 188 to 228 are disordered; that stretch reads PLDEPHGSGLHIHAIHSHGDGHSHDHDHSHSHGDHDHDHKH. Residues 204 to 228 show a composition bias toward basic and acidic residues; it reads SHGDGHSHDHDHSHSHGDHDHDHKH.

The protein belongs to the UreE family.

It is found in the cytoplasm. Involved in urease metallocenter assembly. Binds nickel. Probably functions as a nickel donor during metallocenter assembly. The protein is Urease accessory protein UreE of Yersinia kristensenii.